The chain runs to 294 residues: 4-hydroxy-tetrahydrodipicolinate synthase (294 aa).

Thr-49 contributes to the pyruvate binding site. Tyr-136 functions as the Proton donor/acceptor in the catalytic mechanism. Lys-164 functions as the Schiff-base intermediate with substrate in the catalytic mechanism. Residue Ile-207 coordinates pyruvate.

It belongs to the DapA family. As to quaternary structure, homotetramer; dimer of dimers.

Its subcellular location is the cytoplasm. It carries out the reaction L-aspartate 4-semialdehyde + pyruvate = (2S,4S)-4-hydroxy-2,3,4,5-tetrahydrodipicolinate + H2O + H(+). It functions in the pathway amino-acid biosynthesis; L-lysine biosynthesis via DAP pathway; (S)-tetrahydrodipicolinate from L-aspartate: step 3/4. Catalyzes the condensation of (S)-aspartate-beta-semialdehyde [(S)-ASA] and pyruvate to 4-hydroxy-tetrahydrodipicolinate (HTPA). This chain is 4-hydroxy-tetrahydrodipicolinate synthase, found in Natronomonas pharaonis (strain ATCC 35678 / DSM 2160 / CIP 103997 / JCM 8858 / NBRC 14720 / NCIMB 2260 / Gabara) (Halobacterium pharaonis).